We begin with the raw amino-acid sequence, 294 residues long: tRNA dimethylallyltransferase (294 aa).

10 to 17 lines the ATP pocket; the sequence is GPTAVGKT. A substrate-binding site is contributed by 12–17; the sequence is TAVGKT. Residues 35–38 form an interaction with substrate tRNA region; the sequence is DSQQ.

Belongs to the IPP transferase family. As to quaternary structure, monomer. The cofactor is Mg(2+).

The enzyme catalyses adenosine(37) in tRNA + dimethylallyl diphosphate = N(6)-dimethylallyladenosine(37) in tRNA + diphosphate. Its function is as follows. Catalyzes the transfer of a dimethylallyl group onto the adenine at position 37 in tRNAs that read codons beginning with uridine, leading to the formation of N6-(dimethylallyl)adenosine (i(6)A). The polypeptide is tRNA dimethylallyltransferase (Streptococcus mutans serotype c (strain ATCC 700610 / UA159)).